Here is a 742-residue protein sequence, read N- to C-terminus: MDKFWWHAAWGLCLVPLSLAQIDLNITCRFAGVFHVEKNGRYSISRTEAADLCKAFNSTLPTMAQMEKALSIGFETCRYGFIEGHVVIPRIHPNSICAANNTGVYILTSNTSQYDTYCFNASAPPEEDCTSVTDLPNAFDGPITITIVNRDGTRYVQKGEYRTNPEDIYPSNPTDDDVSSGSSSERSSTSGGYIFYTFSTVHPIPDEDSPWITDSTDRIPATTLMSTSATATETATKRQETWDWFSWLFLPSESKNHLHTTTQMAGTSSNTISAGWEPNEENEDERDRHLSFSGSGIDDDEDFISSTISTTPRAFDHTKQNQDWTQWNPSHSNPEVLLQTTTRMTDVDRNGTTAYEGNWNPEAHPPLIHHEHHEEEETPHSTSTIQATPSSTTEETATQKEQWFGNRWHEGYRQTPKEDSHSTTGTAAASAHTSHPMQGRTTPSPEDSSWTDFFNPISHPMGRGHQAGRRMDMDSSHSITLQPTANPNTGLVEDLDRTGPLSMTTQQSNSQSFSTSHEGLEEDKDHPTTSTLTSSNRNDVTGGRRDPNHSEGSTTLLEGYTSHYPHTKESRTFIPVTSAKTGSFGVTAVTVGDSNSNVNRSLSGDQDTFHPSGGSHTTHGSESDGHSHGSQEGGANTTSGPIRTPQIPEWLIILASLLALALILAVCIAVNSRRRCGQKKKLVINSGNGAVEDRKPSGLNGEASKSQEMVHLVNKESSETPDQFMTADETRNLQNVDMKIGV.

The first 20 residues, 1 to 20, serve as a signal peptide directing secretion; sequence MDKFWWHAAWGLCLVPLSLA. Topologically, residues 21-649 are extracellular; it reads QIDLNITCRF…GPIRTPQIPE (629 aa). A glycan (N-linked (GlcNAc...) asparagine) is linked at asparagine 25. Intrachain disulfides connect cysteine 28-cysteine 129, cysteine 53-cysteine 118, and cysteine 77-cysteine 97. In terms of domain architecture, Link spans 32 to 120; that stretch reads GVFHVEKNGR…TSQYDTYCFN (89 aa). Arginine 41 is a hyaluronan binding site. An N-linked (GlcNAc...) asparagine glycan is attached at asparagine 57. Residues arginine 78 and tyrosine 79 each coordinate hyaluronan. An N-linked (GlcNAc...) asparagine glycan is attached at asparagine 100. Residue tyrosine 105 coordinates hyaluronan. N-linked (GlcNAc...) asparagine glycans are attached at residues asparagine 110 and asparagine 120. Disordered stretches follow at residues 160–189 and 261–285; these read EYRT…RSST and TTQM…NEDE. Low complexity predominate over residues 179 to 189; sequence SSGSSSERSST. A glycan (O-linked (Xyl...) (chondroitin sulfate) serine) is linked at serine 180. Residues 224–649 form a stem region; sequence LMSTSATATE…GPIRTPQIPE (426 aa). Positions 261–273 are enriched in polar residues; it reads TTQMAGTSSNTIS. Asparagine 350 is a glycosylation site (N-linked (GlcNAc...) asparagine). Disordered regions lie at residues 372 to 558 and 590 to 642; these read HHEE…TLLE and TVGD…SGPI. Low complexity predominate over residues 386 to 396; the sequence is QATPSSTTEET. A compositionally biased stretch (basic and acidic residues) spans 407–421; it reads RWHEGYRQTPKEDSH. Residues 422 to 435 show a composition bias toward low complexity; it reads STTGTAAASAHTSH. Polar residues-rich tracts occupy residues 439 to 452 and 476 to 489; these read GRTT…SWTD and SHSI…NPNT. Residues 502-516 show a composition bias toward low complexity; it reads SMTTQQSNSQSFSTS. The segment covering 528 to 539 has biased composition (polar residues); it reads TTSTLTSSNRND. N-linked (GlcNAc...) asparagine glycans are attached at residues asparagine 548 and asparagine 599. Residues 592 to 606 show a composition bias toward polar residues; sequence GDSNSNVNRSLSGDQ. Residues 619-629 are compositionally biased toward basic and acidic residues; that stretch reads HGSESDGHSHG. An N-linked (GlcNAc...) asparagine glycan is attached at asparagine 636. Residues 650-670 form a helical membrane-spanning segment; sequence WLIILASLLALALILAVCIAV. Topologically, residues 671-742 are cytoplasmic; the sequence is NSRRRCGQKK…LQNVDMKIGV (72 aa). A Phosphoserine; by PKC modification is found at serine 672. The segment at 673–691 is required for interaction with EZR, MSN and RDX and for co-localization to microvilli; sequence RRRCGQKKKLVINSGNGAV. 3 positions are modified to phosphoserine: serine 686, serine 697, and serine 706.

In terms of assembly, interacts with PKN2. Interacts with TIAM1 and TIAM2. Interacts with HA, as well as other glycosaminoglycans, collagen, laminin, and fibronectin via its N-terminal segment. Interacts with UNC119. Interacts with PDPN (via extracellular domain); this interaction is required for PDPN-mediated directional migration and regulation of lamellipodia extension/stabilization during cell spreading and migration. Interacts with RDX, EZR and MSN. Interacts with EGFR. Interacts with CD74; this complex is essential for the MIF-induced signaling cascade that results in B cell survival. Post-translationally, proteolytically cleaved in the extracellular matrix by specific proteinases (possibly MMPs) in several cell lines and tumors. N-glycosylated. In terms of processing, O-glycosylated; contains chondroitin sulfate glycans which can be more or less sulfated and whose number may affect the accessibility of specific proteinases to their cleavage site(s). It is uncertain if O-glycosylation occurs on Thr-637 or Thr-638. Post-translationally, phosphorylated; activation of PKC results in the dephosphorylation of Ser-706 (constitutive phosphorylation site), and the phosphorylation of Ser-672. Detected in fibroblasts and urine (at protein level). Detected in placenta (at protein level). Isoform 10 (epithelial isoform) is expressed by cells of epithelium and highly expressed by carcinomas. Expression is repressed in neuroblastoma cells.

The protein resides in the cell membrane. Its subcellular location is the cell projection. The protein localises to the microvillus. It localises to the secreted. Cell-surface receptor that plays a role in cell-cell interactions, cell adhesion and migration, helping them to sense and respond to changes in the tissue microenvironment. Participates thereby in a wide variety of cellular functions including the activation, recirculation and homing of T-lymphocytes, hematopoiesis, inflammation and response to bacterial infection. Engages, through its ectodomain, extracellular matrix components such as hyaluronan/HA, collagen, growth factors, cytokines or proteases and serves as a platform for signal transduction by assembling, via its cytoplasmic domain, protein complexes containing receptor kinases and membrane proteases. Such effectors include PKN2, the RhoGTPases RAC1 and RHOA, Rho-kinases and phospholipase C that coordinate signaling pathways promoting calcium mobilization and actin-mediated cytoskeleton reorganization essential for cell migration and adhesion. In Homo sapiens (Human), this protein is CD44 antigen (CD44).